Consider the following 181-residue polypeptide: Large ribosomal subunit protein uL5 (181 aa).

Belongs to the universal ribosomal protein uL5 family. As to quaternary structure, part of the 50S ribosomal subunit; contacts the 5S rRNA and probably tRNA. Forms a bridge to the 30S subunit in the 70S ribosome.

Functionally, this is one of the proteins that bind and probably mediate the attachment of the 5S RNA into the large ribosomal subunit, where it forms part of the central protuberance. In the 70S ribosome it contacts protein S13 of the 30S subunit (bridge B1b), connecting the 2 subunits; this bridge is implicated in subunit movement. May contact the P site tRNA; the 5S rRNA and some of its associated proteins might help stabilize positioning of ribosome-bound tRNAs. In Methanococcus maripaludis (strain C6 / ATCC BAA-1332), this protein is Large ribosomal subunit protein uL5.